The primary structure comprises 409 residues: MKEKVVLAYSGGLDTSVILKWLCEKGFDVIAYVANVGQKDDFDAIKEKALKTGASKVYVEDLRREFVTDYIFTALLGNAMYEGRYLLGTAIARPLIAKRQVEIAEKEGAQYVAHGATGKGNDQVRFELTYAALNPNLKVISPWKDPEFLAKFKGRTDLINYAMEKGIPIKVSKKRPYSEDENLMHISHEAGKLEDPAYIPDEDVFTWTVSPKDAPDEETLLEIHFENGIPVKVVNLKDGTEKTDPLELFEYLNEVGAKNGVGRLDMVENRFIGIKSRGVYETPGATILWIAHRDLEGITMDKEVMHLRDMLAPKFAELIYNGFWFSPEMEFLLAAFRKAQENVTGKVTVSIYKGNVMPVARYSPYSLYNPELSSMDVEGGFNATDSKGFINIHALRLKVHQLVKKGYQK.

ATP is bound by residues Ala8–Ser16 and Ala34. Tyr85 lines the L-citrulline pocket. Gly115 lines the ATP pocket. The L-aspartate site is built by Thr117, Asn121, and Asp122. Residue Asn121 participates in L-citrulline binding. Residues Arg125, Ser178, Ser187, Glu268, and Tyr280 each coordinate L-citrulline.

This sequence belongs to the argininosuccinate synthase family. Type 1 subfamily. Homotetramer.

It is found in the cytoplasm. It carries out the reaction L-citrulline + L-aspartate + ATP = 2-(N(omega)-L-arginino)succinate + AMP + diphosphate + H(+). Its pathway is amino-acid biosynthesis; L-arginine biosynthesis; L-arginine from L-ornithine and carbamoyl phosphate: step 2/3. The protein is Argininosuccinate synthase of Thermotoga petrophila (strain ATCC BAA-488 / DSM 13995 / JCM 10881 / RKU-1).